The sequence spans 162 residues: Chemoreceptor glutamine deamidase CheD (162 aa).

Belongs to the CheD family. As to quaternary structure, forms a complex with CheC.

The catalysed reaction is L-glutaminyl-[protein] + H2O = L-glutamyl-[protein] + NH4(+). Functionally, deamidates glutamine residues to glutamate on methyl-accepting chemotaxis receptors (MCPs). CheD-mediated MCP deamidation is required for productive communication of the conformational signals of the chemoreceptors to the CheA kinase. This is Chemoreceptor glutamine deamidase CheD from Halalkalibacterium halodurans (strain ATCC BAA-125 / DSM 18197 / FERM 7344 / JCM 9153 / C-125) (Bacillus halodurans).